Reading from the N-terminus, the 381-residue chain is Phthiodiolone/phenolphthiodiolone dimycocerosates ketoreductase (381 aa).

It belongs to the mer family. Phthiodiolone/phenolphthiodiolone dimycocerosates ketoreductase subfamily.

Its function is as follows. Catalyzes the reduction of the keto moiety of phthiodiolone dimycocerosates (DIM B) and glycosylated phenolphthiodiolone dimycocerosates to form the intermediate compounds phthiotriol and glycosylated phenolphthiotriol dimycocerosates during phthiocerol dimycocerosates (DIM A) and glycosylated phenolphthiocerol dimycocerosates (PGL) biosynthesis. This chain is Phthiodiolone/phenolphthiodiolone dimycocerosates ketoreductase, found in Mycobacterium tuberculosis (strain CDC 1551 / Oshkosh).